The chain runs to 569 residues: BICD family-like cargo adapter 1 (569 aa).

Residues 1 to 36 (MSASCLDLISAPPQPDSDRMDRALNPGRQNSPDTAG) are disordered. The CC1 box signature appears at 97–101 (AAKLG). Residues 102-283 (KALLERNQDL…TLELEKHCHH (182 aa)) are a coiled coil. Positions 385-405 (ALSTDSSMDESSETLSAKDVP) are disordered. A coiled-coil region spans residues 458-520 (NEQLQSAIRD…LEAWQDDMHR (63 aa)). The disordered stretch occupies residues 533 to 554 (EWKDPPFSFSRRGAAASRPTQR).

The protein belongs to the BICDR family. In terms of assembly, part of a tripartite complex with dynein and dynactin, acts an adapter linking the dynein motor complex and dynactin. Highly expressed in developing neural tissues and developing eye.

It is found in the cytoplasm. The protein resides in the cytoskeleton. Its subcellular location is the microtubule organizing center. It localises to the centrosome. Its function is as follows. Acts as an adapter protein linking the dynein motor complex to various cargos and converts dynein from a non-processive to a highly processive motor in the presence of dynactin. Facilitates the interaction between dynein and dynactin and activates dynein processivity (the ability to move along a microtubule for a long distance without falling off the track). Predominantly recruits 2 dyneins, which increases both the force and speed of the microtubule motor. Component of secretory vesicle machinery in developing neurons that acts as a regulator of neurite outgrowth. Regulates the secretory vesicle transport by controlling the accumulation of Rab6-containing secretory vesicles in the pericentrosomal region restricting anterograde secretory transport during the early phase of neuronal differentiation, thereby inhibiting neuritogenesis. This chain is BICD family-like cargo adapter 1 (bicdl1), found in Danio rerio (Zebrafish).